Here is a 295-residue protein sequence, read N- to C-terminus: Release factor glutamine methyltransferase (295 aa).

Residues 127–131 (GTGSG), Asp-150, Phe-179, and Asn-195 each bind S-adenosyl-L-methionine. 195 to 198 (NPPY) contacts substrate.

This sequence belongs to the protein N5-glutamine methyltransferase family. PrmC subfamily.

It carries out the reaction L-glutaminyl-[peptide chain release factor] + S-adenosyl-L-methionine = N(5)-methyl-L-glutaminyl-[peptide chain release factor] + S-adenosyl-L-homocysteine + H(+). Methylates the class 1 translation termination release factors RF1/PrfA and RF2/PrfB on the glutamine residue of the universally conserved GGQ motif. The sequence is that of Release factor glutamine methyltransferase from Nitratidesulfovibrio vulgaris (strain ATCC 29579 / DSM 644 / CCUG 34227 / NCIMB 8303 / VKM B-1760 / Hildenborough) (Desulfovibrio vulgaris).